We begin with the raw amino-acid sequence, 201 residues long: tRNA (guanine-N(7)-)-methyltransferase (201 aa).

Residues Glu-33, Glu-58, Asp-85, and Asp-106 each coordinate S-adenosyl-L-methionine. The active site involves Asp-106. Substrate is bound by residues Lys-110, Asp-142, and 180–183 (TTYE).

The protein belongs to the class I-like SAM-binding methyltransferase superfamily. TrmB family.

It catalyses the reaction guanosine(46) in tRNA + S-adenosyl-L-methionine = N(7)-methylguanosine(46) in tRNA + S-adenosyl-L-homocysteine. Its pathway is tRNA modification; N(7)-methylguanine-tRNA biosynthesis. In terms of biological role, catalyzes the formation of N(7)-methylguanine at position 46 (m7G46) in tRNA. The chain is tRNA (guanine-N(7)-)-methyltransferase from Mesomycoplasma hyopneumoniae (strain 7448) (Mycoplasma hyopneumoniae).